Consider the following 209-residue polypeptide: Superoxide dismutase [Mn/Fe] (209 aa).

4 residues coordinate Fe(3+): His38, His90, Asp172, and His176. His38, His90, Asp172, and His176 together coordinate Mn(2+).

The protein belongs to the iron/manganese superoxide dismutase family. Mn(2+) serves as cofactor. It depends on Fe(3+) as a cofactor.

It carries out the reaction 2 superoxide + 2 H(+) = H2O2 + O2. Destroys superoxide anion radicals which are normally produced within the cells and which are toxic to biological systems. Catalyzes the dismutation of superoxide anion radicals into O2 and H2O2 by successive reduction and oxidation of the transition metal ion at the active site. In Rickettsia typhi (strain ATCC VR-144 / Wilmington), this protein is Superoxide dismutase [Mn/Fe] (sodB).